A 180-amino-acid chain; its full sequence is Large ribosomal subunit protein uL5 (180 aa).

Belongs to the universal ribosomal protein uL5 family. Part of the 50S ribosomal subunit; part of the 5S rRNA/L5/L18/L25 subcomplex. Contacts the 5S rRNA and the P site tRNA. Forms a bridge to the 30S subunit in the 70S ribosome.

Its function is as follows. This is one of the proteins that bind and probably mediate the attachment of the 5S RNA into the large ribosomal subunit, where it forms part of the central protuberance. In the 70S ribosome it contacts protein S13 of the 30S subunit (bridge B1b), connecting the 2 subunits; this bridge is implicated in subunit movement. Contacts the P site tRNA; the 5S rRNA and some of its associated proteins might help stabilize positioning of ribosome-bound tRNAs. The protein is Large ribosomal subunit protein uL5 of Roseiflexus sp. (strain RS-1).